The sequence spans 973 residues: ATP-dependent DNA helicase Q5 (973 aa).

Residues 39-213 (MAVVKGDKDV…FAALHLKQPV (175 aa)) enclose the Helicase ATP-binding domain. 52–59 (MPTGAGKS) lines the ATP pocket. The DEAH box motif lies at 157–160 (DEAH). The 158-residue stretch at 241–398 (NLRDFCLKAL…NKPSDKATLL (158 aa)) folds into the Helicase C-terminal domain. Zn(2+)-binding residues include Cys-412, Cys-428, Cys-432, and Cys-435. Residues Ser-489 and Ser-492 each carry the phosphoserine modification. An interaction with POLR2A region spans residues 491–621 (GSGDEGRDEA…ASKDGQLYDM (131 aa)). 3 disordered regions span residues 518-538 (GKEA…LRDA), 679-795 (TEKL…VPGK), and 822-884 (CSLE…AREP). Phosphothreonine is present on Thr-527. Positions 653 to 726 (PKRVGAGFSK…APGSRTNCGD (74 aa)) are interaction with RAD51. Position 728 is a phosphoserine; by CDK1 (Ser-728). Residues 840-856 (TQAEKRPRPQQESQEKR) are compositionally biased toward basic and acidic residues. Polar residues predominate over residues 863–878 (PSTNSSALASDPSTEN).

It belongs to the helicase family. RecQ subfamily. In terms of assembly, monomer. Interacts with TOP2A, TOP3A and TOP3B. Interacts with RNA polymerase II subunit POLR2A. Identified in a complex with the RNA polymerase II core bound to DNA. Interacts with RAD51. Interacts with WRN; this interaction stimulates WRN helicase activity on DNA fork duplexes. Interacts with MUS1; this interaction promotes MUS81-dependent mitotic DNA synthesis. It depends on Zn(2+) as a cofactor. Post-translationally, phosphorylated by CDK1 at Ser-728; this phosphorylation is required for RECQL5-mediated disruption of RAD51 filaments on stalled replication forks.

It is found in the nucleus. The protein localises to the nucleoplasm. The catalysed reaction is Couples ATP hydrolysis with the unwinding of duplex DNA by translocating in the 3'-5' direction.. It catalyses the reaction ATP + H2O = ADP + phosphate + H(+). Functionally, DNA helicase that plays an important role in DNA replication, transcription and repair. Binds to the RNA polymerase II subunit POLR2A during transcription elongation and suppresses transcription-associated genomic instability. Also associates with POLR1A and enforces the stability of ribosomal DNA arrays. Plays an important role in mitotic chromosome separation after cross-over events and cell cycle progress. Mechanistically, removes RAD51 filaments protecting stalled replication forks at common fragile sites and stimulates MUS81-EME1 endonuclease leading to mitotic DNA synthesis. Required for efficient DNA repair, including repair of inter-strand cross-links. Stimulates DNA decatenation mediated by TOP2A. Prevents sister chromatid exchange and homologous recombination. This is ATP-dependent DNA helicase Q5 (Recql5) from Rattus norvegicus (Rat).